A 160-amino-acid polypeptide reads, in one-letter code: Ureidoglycolate lyase (160 aa).

This sequence belongs to the ureidoglycolate lyase family. Homodimer. Requires Ni(2+) as cofactor.

It catalyses the reaction (S)-ureidoglycolate = urea + glyoxylate. It functions in the pathway nitrogen metabolism; (S)-allantoin degradation. Catalyzes the catabolism of the allantoin degradation intermediate (S)-ureidoglycolate, generating urea and glyoxylate. Involved in the anaerobic utilization of allantoin as sole nitrogen source. Reinforces the induction of genes involved in the degradation of allantoin and glyoxylate by producing glyoxylate. This is Ureidoglycolate lyase from Escherichia coli O139:H28 (strain E24377A / ETEC).